The following is a 313-amino-acid chain: MTIKLKCLSHTPLRGLNDPAPEVIAEVDAVLARARADVEAFDPELIVIFAPDHYNGLFYDLMPPFVIATAAKSVGDYMTLPGPLSVERDLALELARFILDHDVDISLSHRLQVDHGCTQTLEELTGSLTRYPVIPIIINSVAPPFAPYRRIRRLGEVVGQFIATLDKRVLVLGTGGLSHEPPVPLLEGAPEAIGEFLICGRNPTPEARAARQERTIAAGKIYGTELSAQTPLNAEWDQAFIDLLLDARLDAVDDFSIEEISKEAGRSTHEVRTWVAAFAALAAARGGYSAHRDYYRPINEWIAGYGVMSAEPR.

The active-site Proton donor is the histidine 115. Histidine 179 functions as the Proton acceptor in the catalytic mechanism.

The protein belongs to the LigB/MhpB extradiol dioxygenase family. In terms of assembly, homotetramer. The cofactor is Fe(2+).

The catalysed reaction is 3-(2,3-dihydroxyphenyl)propanoate + O2 = (2Z,4E)-2-hydroxy-6-oxonona-2,4-dienedioate + H(+). It carries out the reaction (2E)-3-(2,3-dihydroxyphenyl)prop-2-enoate + O2 = (2Z,4E,7E)-2-hydroxy-6-oxonona-2,4,7-trienedioate + H(+). The protein operates within aromatic compound metabolism; 3-phenylpropanoate degradation. Its function is as follows. Catalyzes the non-heme iron(II)-dependent oxidative cleavage of 2,3-dihydroxyphenylpropionic acid and 2,3-dihydroxicinnamic acid into 2-hydroxy-6-ketononadienedioate and 2-hydroxy-6-ketononatrienedioate, respectively. This chain is 2,3-dihydroxyphenylpropionate/2,3-dihydroxicinnamic acid 1,2-dioxygenase, found in Xanthobacter autotrophicus (strain ATCC BAA-1158 / Py2).